We begin with the raw amino-acid sequence, 871 residues long: uncharacterized protein (871 aa).

The next 11 membrane-spanning stretches (helical) occupy residues 11–31 (AFVS…GLFL), 92–112 (YLFT…PILL), 139–159 (FYAH…IIYR), 380–400 (TILT…GCIS), 422–442 (LLGI…MSLV), 475–495 (VQVF…VQVI), 520–540 (FLLQ…TLLL), 562–582 (LSAP…TIMI), 586–606 (IIAP…YFAY), 629–649 (LFQV…LFVL), and 653–673 (WGAT…HLYF). A phosphoserine mark is found at Ser-725, Ser-726, Ser-727, Ser-729, Ser-737, and Ser-761. Polar residues predominate over residues 727–740 (SGSDEFLETSSRTS). A disordered region spans residues 727 to 746 (SGSDEFLETSSRTSENTKEK).

The protein belongs to the CSC1 (TC 1.A.17) family.

The protein localises to the golgi apparatus membrane. Acts as an osmosensitive calcium-permeable cation channel. This is an uncharacterized protein from Schizosaccharomyces pombe (strain 972 / ATCC 24843) (Fission yeast).